The primary structure comprises 611 residues: Chloroplast sensor kinase, chloroplastic (611 aa).

A chloroplast-targeting transit peptide spans 1-79 (MLLSAIASQT…PGGGETMVAS (79 aa)). A disordered region spans residues 17-50 (NLHFSNSIPNPRPSNPSLKLLNASSSSSSSSSSS). A compositionally biased stretch (low complexity) spans 40–50 (SSSSSSSSSSS). The interval 116-300 (DFQRLCLEQL…VMDQKTMLLQ (185 aa)) is GAF. [3Fe-4S] cluster is bound at residue C121. S188 is modified (phosphoserine). In terms of domain architecture, Histidine kinase spans 312–602 (KLVEQIRGPL…RVELWLPAFP (291 aa)). Positions 345–380 (VEDLIVQGDQIKDTLEELQDAVHLTKANIVRHNEEA) form a coiled coil. The span at 385 to 402 (NKTHNETRRSKYEHKDPI) shows a compositional bias: basic and acidic residues. The disordered stretch occupies residues 385-420 (NKTHNETRRSKYEHKDPIDGSQISSTRLSLGSGLDD).

Belongs to the chloroplast sensor kinase protein family. Self-interacts. Interacts with the plastoquinone analog 2,5-dibromo-3-methyl-5-isopropyl-p-benzoquinone (DBMIB) and with SIGA/SIG1. Requires [3Fe-4S] cluster as cofactor. In terms of processing, autophosphorylated, possibly on tyrosine residues, in photosystem I (PS I) light and in the presence of manganese ions Mn(2+), to a lesser degree, in the presence of calcium ions Ca(2+), but not in the presence of magnesium ions Mg(2+). Dithiothreitol (DTT) stimulates autophosphorylation. Phosphorylated on Ser-188 in vivo after exposure to far-red light (when plastoquinone (PQ) is oxidized). Not phosphorylated under orange light (reduces PQ).

The protein resides in the plastid. Its subcellular location is the chloroplast stroma. It catalyses the reaction L-tyrosyl-[protein] + ATP = O-phospho-L-tyrosyl-[protein] + ADP + H(+). Functionally, sensor kinase that senses the plastoquinone (PQ) redox state involved in stoichiometry adjustment of both photosystems (e.g. long-term adaptation via transcriptional regulation of reaction center genes of photosystems I and II) and state transitions (e.g. short-term adaptation involving reversible post-translational phosphorylation of light-harvesting complex II, LHC II), thus linking photosynthesis with gene expression in chloroplasts. Autophosphorylates, probably on a tyrosine residue. Probably phosphorylates SIGA/SIG1 in response to plastoquinone redox state modification. Reduced PQ suppresses its autophosphorylation activity. Represses expression of a number of chloroplast-encoded genes. The chain is Chloroplast sensor kinase, chloroplastic from Arabidopsis thaliana (Mouse-ear cress).